Here is a 337-residue protein sequence, read N- to C-terminus: Dihydroorotate dehydrogenase (quinone) (337 aa).

FMN is bound by residues 58–62 and T82; that span reads AGLDK. Residue K62 participates in substrate binding. 107 to 111 is a binding site for substrate; the sequence is NCMGF. Positions 137 and 170 each coordinate FMN. N170 provides a ligand contact to substrate. The active-site Nucleophile is S173. N175 contacts substrate. The FMN site is built by K215 and T243. 244–245 is a binding site for substrate; that stretch reads NT. Residues G266, G294, and 315 to 316 each bind FMN; that span reads YS.

It belongs to the dihydroorotate dehydrogenase family. Type 2 subfamily. Monomer. FMN serves as cofactor.

It localises to the cell membrane. The catalysed reaction is (S)-dihydroorotate + a quinone = orotate + a quinol. It functions in the pathway pyrimidine metabolism; UMP biosynthesis via de novo pathway; orotate from (S)-dihydroorotate (quinone route): step 1/1. Functionally, catalyzes the conversion of dihydroorotate to orotate with quinone as electron acceptor. The chain is Dihydroorotate dehydrogenase (quinone) from Dichelobacter nodosus (strain VCS1703A).